The chain runs to 92 residues: MATEQTILVGKKPTTNYVIATVMAFNAGVKKVVLKARGAAISKAVSTAVMVRDRFLPGKVQIKDIKLLSDKVQGQGGRERTVAAVEIVLEMA.

The residue at position 11 (K11) is an N6-acetyllysine.

The protein belongs to the histone-like Alba family. In terms of processing, acetylated. Acetylation at Lys-11 decreases DNA-binding affinity.

Its subcellular location is the cytoplasm. It is found in the chromosome. Binds double-stranded DNA tightly but without sequence specificity. Involved in DNA compaction. In Pyrobaculum islandicum (strain DSM 4184 / JCM 9189 / GEO3), this protein is DNA/RNA-binding protein Alba.